The sequence spans 298 residues: 4-hydroxy-3-methylbut-2-enyl diphosphate reductase (298 aa).

Cys12 contacts [4Fe-4S] cluster. His40 and His78 together coordinate (2E)-4-hydroxy-3-methylbut-2-enyl diphosphate. His40 and His78 together coordinate dimethylallyl diphosphate. Isopentenyl diphosphate-binding residues include His40 and His78. Cys100 contacts [4Fe-4S] cluster. A (2E)-4-hydroxy-3-methylbut-2-enyl diphosphate-binding site is contributed by His128. Residue His128 coordinates dimethylallyl diphosphate. His128 lines the isopentenyl diphosphate pocket. Glu130 acts as the Proton donor in catalysis. Residue Thr171 coordinates (2E)-4-hydroxy-3-methylbut-2-enyl diphosphate. Cys200 contributes to the [4Fe-4S] cluster binding site. Ser228, Ser229, Asn230, and Ser270 together coordinate (2E)-4-hydroxy-3-methylbut-2-enyl diphosphate. Dimethylallyl diphosphate contacts are provided by Ser228, Ser229, Asn230, and Ser270. The isopentenyl diphosphate site is built by Ser228, Ser229, Asn230, and Ser270.

It belongs to the IspH family. Requires [4Fe-4S] cluster as cofactor.

The enzyme catalyses isopentenyl diphosphate + 2 oxidized [2Fe-2S]-[ferredoxin] + H2O = (2E)-4-hydroxy-3-methylbut-2-enyl diphosphate + 2 reduced [2Fe-2S]-[ferredoxin] + 2 H(+). It catalyses the reaction dimethylallyl diphosphate + 2 oxidized [2Fe-2S]-[ferredoxin] + H2O = (2E)-4-hydroxy-3-methylbut-2-enyl diphosphate + 2 reduced [2Fe-2S]-[ferredoxin] + 2 H(+). Its pathway is isoprenoid biosynthesis; dimethylallyl diphosphate biosynthesis; dimethylallyl diphosphate from (2E)-4-hydroxy-3-methylbutenyl diphosphate: step 1/1. It functions in the pathway isoprenoid biosynthesis; isopentenyl diphosphate biosynthesis via DXP pathway; isopentenyl diphosphate from 1-deoxy-D-xylulose 5-phosphate: step 6/6. In terms of biological role, catalyzes the conversion of 1-hydroxy-2-methyl-2-(E)-butenyl 4-diphosphate (HMBPP) into a mixture of isopentenyl diphosphate (IPP) and dimethylallyl diphosphate (DMAPP). Acts in the terminal step of the DOXP/MEP pathway for isoprenoid precursor biosynthesis. This chain is 4-hydroxy-3-methylbut-2-enyl diphosphate reductase, found in Kosmotoga olearia (strain ATCC BAA-1733 / DSM 21960 / TBF 19.5.1).